The sequence spans 364 residues: Long-wave-sensitive opsin 1 (364 aa).

Topologically, residues 1–52 are extracellular; that stretch reads MAHTWGPQRLAGGQPQANFEESTQGSIFTYTNSNSTRDPFEGPNYHIAPRWV. O-linked (GlcNAc) serine glycosylation occurs at serine 22. Residue asparagine 34 is glycosylated (N-linked (GlcNAc...) asparagine). The helical transmembrane segment at 53-77 threads the bilayer; it reads YHLTSAWMVFVVIASVFTNGLVLAA. Residues 78 to 89 are Cytoplasmic-facing; sequence TMRFKKLRHPLN. A helical transmembrane segment spans residues 90-115; it reads WILVNLAIADLAETIIASTISVVNQM. The Extracellular segment spans residues 116–129; it reads YGYFVLGHPLCVVE. A disulfide bridge connects residues cysteine 126 and cysteine 203. The helical transmembrane segment at 130 to 149 threads the bilayer; sequence GYTVSLCGITGLWSLAIISW. The Cytoplasmic portion of the chain corresponds to 150-168; the sequence is ERWMVVCKPFGNVRFDAKL. A helical membrane pass occupies residues 169 to 192; sequence ATAGIAFSWIWAAVWTAPPIFGWS. Topologically, residues 193–218 are extracellular; that stretch reads RYWPHGLKTSCGPDVFSGSSYPGVQS. A helical transmembrane segment spans residues 219–246; it reads YMIVLMITCCFIPLSVIILCYLQVWLAI. Over 247-268 the chain is Cytoplasmic; the sequence is RAVAKQQKESESTQKAEKEVTR. The helical transmembrane segment at 269–292 threads the bilayer; sequence MVMVMIFAYCLCWGPYTFFACFAA. The Extracellular segment spans residues 293 to 300; sequence AHPGYAFH. A helical transmembrane segment spans residues 301 to 325; that stretch reads PLVAALPAYFAKSATIYNPIIYVFM. Lysine 312 bears the N6-(retinylidene)lysine mark. Over 326–364 the chain is Cytoplasmic; it reads NRQFRNCILQLFGKKVDDSSELSSVSKTEASSVSSVSPA.

This sequence belongs to the G-protein coupled receptor 1 family. Opsin subfamily. In terms of processing, phosphorylated on some or all of the serine and threonine residues present in the C-terminal region. In terms of tissue distribution, the three color pigments are found in the cone photoreceptor cells.

It is found in the membrane. Visual pigments are the light-absorbing molecules that mediate vision. They consist of an apoprotein, opsin, covalently linked to cis-retinal. In Capra hircus (Goat), this protein is Long-wave-sensitive opsin 1 (OPN1LW).